Consider the following 155-residue polypeptide: Ribosome maturation factor RimP (155 aa).

Belongs to the RimP family.

The protein localises to the cytoplasm. Its function is as follows. Required for maturation of 30S ribosomal subunits. This chain is Ribosome maturation factor RimP, found in Listeria welshimeri serovar 6b (strain ATCC 35897 / DSM 20650 / CCUG 15529 / CIP 8149 / NCTC 11857 / SLCC 5334 / V8).